A 393-amino-acid chain; its full sequence is NAD(P)H-quinone oxidoreductase subunit H, chloroplastic (393 aa).

It belongs to the complex I 49 kDa subunit family. NDH is composed of at least 16 different subunits, 5 of which are encoded in the nucleus.

The protein resides in the plastid. The protein localises to the chloroplast thylakoid membrane. It carries out the reaction a plastoquinone + NADH + (n+1) H(+)(in) = a plastoquinol + NAD(+) + n H(+)(out). The enzyme catalyses a plastoquinone + NADPH + (n+1) H(+)(in) = a plastoquinol + NADP(+) + n H(+)(out). In terms of biological role, NDH shuttles electrons from NAD(P)H:plastoquinone, via FMN and iron-sulfur (Fe-S) centers, to quinones in the photosynthetic chain and possibly in a chloroplast respiratory chain. The immediate electron acceptor for the enzyme in this species is believed to be plastoquinone. Couples the redox reaction to proton translocation, and thus conserves the redox energy in a proton gradient. The chain is NAD(P)H-quinone oxidoreductase subunit H, chloroplastic from Platanus occidentalis (Sycamore).